The following is a 403-amino-acid chain: GPI mannosyltransferase 1 (403 aa).

Topologically, residues Met-1–Glu-4 are cytoplasmic. The helical transmembrane segment at Glu-5 to Tyr-25 threads the bilayer. At Gln-26 to Gly-78 the chain is on the lumenal side. Residues Trp-79–Met-99 traverse the membrane as a helical segment. Over Lys-100–Arg-110 the chain is Cytoplasmic. Residues Ala-111–Gly-131 traverse the membrane as a helical segment. Asn-132 is a topological domain (lumenal). A helical membrane pass occupies residues Ala-133 to Gln-149. Over Lys-150–Tyr-160 the chain is Cytoplasmic. A helical membrane pass occupies residues Gly-161 to Ile-181. Residues Tyr-182–Gln-193 are Lumenal-facing. The chain crosses the membrane as a helical span at residues Leu-194 to Ala-214. Residues Met-215–Ala-266 are Cytoplasmic-facing. A helical transmembrane segment spans residues Phe-267–Phe-287. Over Asp-288 to Ser-310 the chain is Lumenal. Residues Gln-311–Trp-331 traverse the membrane as a helical segment. At Lys-332–Gly-334 the chain is on the cytoplasmic side. The helical transmembrane segment at Leu-335–Leu-355 threads the bilayer. Topologically, residues Glu-356–Asn-361 are lumenal. A helical membrane pass occupies residues Val-362 to Leu-382. The Cytoplasmic segment spans residues Gly-383–Asn-403.

Belongs to the PIGM family.

The protein resides in the endoplasmic reticulum membrane. It participates in glycolipid biosynthesis; glycosylphosphatidylinositol-anchor biosynthesis. Its function is as follows. Mannosyltransferase involved in glycosylphosphatidylinositol-anchor biosynthesis. Transfers the first alpha-1,4-mannose to GlcN-acyl-PI during GPI precursor assembly. Required for cell wall integrity. In Saccharomyces cerevisiae (strain ATCC 204508 / S288c) (Baker's yeast), this protein is GPI mannosyltransferase 1 (GPI14).